A 510-amino-acid chain; its full sequence is 3,4-dihydroxyphenylacetaldehyde synthase (510 aa).

The active site involves asparagine 192. Lysine 303 carries the N6-(pyridoxal phosphate)lysine modification.

This sequence belongs to the group II decarboxylase family. Pyridoxal 5'-phosphate is required as a cofactor.

The catalysed reaction is L-dopa + O2 + H2O + H(+) = 3,4-dihydroxyphenylacetaldehyde + H2O2 + NH4(+) + CO2. In terms of biological role, catalyzes the decarboxylation-oxidative deamination of L-3,4-dihydroxyphenylalanine (L-DOPA) to 3,4-dihydroxylphenylacetaldehyde (DHPAA). Involved in cuticle development. Probably responsible for the protein cross-linking during the development of flexible cuticles. The protein is 3,4-dihydroxyphenylacetaldehyde synthase (amd) of Drosophila melanogaster (Fruit fly).